Here is an 857-residue protein sequence, read N- to C-terminus: Cadherin-related family member 1a (857 aa).

Residues 1 to 25 (MKNAREIQFSSFLLLAHFCFVGAQS) form the signal peptide. At 26 to 709 (DYAPYFYDNG…RENPMHFLGL (684 aa)) the chain is on the extracellular side. 6 Cadherin domains span residues 40 to 139 (NGNM…RPQF), 140 to 252 (QNMP…PPIF), 253 to 359 (IGTP…PPTF), 365 to 478 (PQNV…APKF), 479 to 582 (TSDF…PPAF), and 574 to 693 (DLND…GPLT). A helical transmembrane segment spans residues 710-730 (ISGVILILVFVTVIISTVIFV). At 731 to 857 (RRNKANRILP…LEQKNMANRY (127 aa)) the chain is on the cytoplasmic side. The interval 746–765 (RKKRKPQKQDDFQEPFREEQ) is disordered. Positions 752 to 765 (QKQDDFQEPFREEQ) are enriched in basic and acidic residues.

In terms of tissue distribution, expressed in photoreceptor cells of the outer nuclear layer of the retina and in the pinal gland.

The protein localises to the membrane. Functionally, potential calcium-dependent cell-adhesion protein. Plays a role in the organization of retinal cell layers and Muller glia morphology. This Danio rerio (Zebrafish) protein is Cadherin-related family member 1a.